The sequence spans 105 residues: ATP synthase subunit c (105 aa).

The next 2 membrane-spanning stretches (helical) occupy residues 32–52 (SILG…IGMG) and 78–98 (VAMA…IIAI).

It belongs to the ATPase C chain family. As to quaternary structure, F-type ATPases have 2 components, F(1) - the catalytic core - and F(0) - the membrane proton channel. F(1) has five subunits: alpha(3), beta(3), gamma(1), delta(1), epsilon(1). F(0) has three main subunits: a(1), b(2) and c(10-14). The alpha and beta chains form an alternating ring which encloses part of the gamma chain. F(1) is attached to F(0) by a central stalk formed by the gamma and epsilon chains, while a peripheral stalk is formed by the delta and b chains.

Its subcellular location is the cell inner membrane. In terms of biological role, f(1)F(0) ATP synthase produces ATP from ADP in the presence of a proton or sodium gradient. F-type ATPases consist of two structural domains, F(1) containing the extramembraneous catalytic core and F(0) containing the membrane proton channel, linked together by a central stalk and a peripheral stalk. During catalysis, ATP synthesis in the catalytic domain of F(1) is coupled via a rotary mechanism of the central stalk subunits to proton translocation. Its function is as follows. Key component of the F(0) channel; it plays a direct role in translocation across the membrane. A homomeric c-ring of between 10-14 subunits forms the central stalk rotor element with the F(1) delta and epsilon subunits. The sequence is that of ATP synthase subunit c from Helicobacter pylori (strain ATCC 700392 / 26695) (Campylobacter pylori).